A 551-amino-acid chain; its full sequence is Glucose-6-phosphate isomerase (551 aa).

The active-site Proton donor is Glu-352. Catalysis depends on residues His-383 and Lys-511.

It belongs to the GPI family.

It localises to the cytoplasm. The enzyme catalyses alpha-D-glucose 6-phosphate = beta-D-fructose 6-phosphate. It functions in the pathway carbohydrate biosynthesis; gluconeogenesis. It participates in carbohydrate degradation; glycolysis; D-glyceraldehyde 3-phosphate and glycerone phosphate from D-glucose: step 2/4. Functionally, catalyzes the reversible isomerization of glucose-6-phosphate to fructose-6-phosphate. This is Glucose-6-phosphate isomerase from Chlorobium luteolum (strain DSM 273 / BCRC 81028 / 2530) (Pelodictyon luteolum).